The chain runs to 420 residues: 3-isopropylmalate dehydratase large subunit (420 aa).

C300, C360, and C363 together coordinate [4Fe-4S] cluster.

This sequence belongs to the aconitase/IPM isomerase family. LeuC type 2 subfamily. As to quaternary structure, heterodimer of LeuC and LeuD. [4Fe-4S] cluster serves as cofactor.

The enzyme catalyses (2R,3S)-3-isopropylmalate = (2S)-2-isopropylmalate. It participates in amino-acid biosynthesis; L-leucine biosynthesis; L-leucine from 3-methyl-2-oxobutanoate: step 2/4. Functionally, catalyzes the isomerization between 2-isopropylmalate and 3-isopropylmalate, via the formation of 2-isopropylmaleate. This Helicobacter hepaticus (strain ATCC 51449 / 3B1) protein is 3-isopropylmalate dehydratase large subunit.